Here is a 116-residue protein sequence, read N- to C-terminus: Large ribosomal subunit protein bL19 (116 aa).

Belongs to the bacterial ribosomal protein bL19 family.

This protein is located at the 30S-50S ribosomal subunit interface and may play a role in the structure and function of the aminoacyl-tRNA binding site. The protein is Large ribosomal subunit protein bL19 of Pseudomonas savastanoi pv. phaseolicola (strain 1448A / Race 6) (Pseudomonas syringae pv. phaseolicola (strain 1448A / Race 6)).